Here is a 342-residue protein sequence, read N- to C-terminus: S-methyl-5'-thioadenosine phosphorylase (342 aa).

Phosphate-binding positions include threonine 51, 99 to 100, and 132 to 133; these read RH and SA. Methionine 234 serves as a coordination point for substrate. Serine 235 contributes to the phosphate binding site. Substrate is bound at residue 258–260; it reads DYD.

This sequence belongs to the PNP/MTAP phosphorylase family. MTAP subfamily. Homotrimer.

The protein resides in the cytoplasm. Its subcellular location is the nucleus. It carries out the reaction S-methyl-5'-thioadenosine + phosphate = 5-(methylsulfanyl)-alpha-D-ribose 1-phosphate + adenine. Its pathway is amino-acid biosynthesis; L-methionine biosynthesis via salvage pathway; S-methyl-5-thio-alpha-D-ribose 1-phosphate from S-methyl-5'-thioadenosine (phosphorylase route): step 1/1. Functionally, catalyzes the reversible phosphorylation of S-methyl-5'-thioadenosine (MTA) to adenine and 5-methylthioribose-1-phosphate. Involved in the breakdown of MTA, a major by-product of polyamine biosynthesis. Responsible for the first step in the methionine salvage pathway after MTA has been generated from S-adenosylmethionine. Has broad substrate specificity with 6-aminopurine nucleosides as preferred substrates. The chain is S-methyl-5'-thioadenosine phosphorylase from Aspergillus fumigatus (strain ATCC MYA-4609 / CBS 101355 / FGSC A1100 / Af293) (Neosartorya fumigata).